We begin with the raw amino-acid sequence, 548 residues long: Beta-lactamase-like protein 2 (548 aa).

A signal peptide spans 1 to 24; sequence MKIMNKQSITIFLIICFLINLILS. N-linked (GlcNAc...) asparagine glycosylation is found at Asn237, Asn258, Asn443, and Asn459.

This sequence belongs to the beta-lactamase family.

The protein resides in the secreted. This Dictyostelium discoideum (Social amoeba) protein is Beta-lactamase-like protein 2.